A 447-amino-acid chain; its full sequence is Argininosuccinate synthase (447 aa).

Residues 17 to 25 and Ala-43 each bind ATP; that span reads AFSGGLDTS. Tyr-99 lines the L-citrulline pocket. Positions 129 and 131 each coordinate ATP. Positions 131, 135, and 136 each coordinate L-aspartate. Position 135 (Asn-135) interacts with L-citrulline. An ATP-binding site is contributed by Asp-136. L-citrulline-binding residues include Arg-139 and Ser-192. Asp-194 contacts ATP. L-citrulline contacts are provided by Thr-201, Glu-203, and Glu-280.

Belongs to the argininosuccinate synthase family. Type 2 subfamily. As to quaternary structure, homotetramer.

Its subcellular location is the cytoplasm. The enzyme catalyses L-citrulline + L-aspartate + ATP = 2-(N(omega)-L-arginino)succinate + AMP + diphosphate + H(+). It participates in amino-acid biosynthesis; L-arginine biosynthesis; L-arginine from L-ornithine and carbamoyl phosphate: step 2/3. This is Argininosuccinate synthase from Escherichia coli O9:H4 (strain HS).